We begin with the raw amino-acid sequence, 739 residues long: Ankyrin repeat and SAM domain-containing protein 6 (739 aa).

ANK repeat units follow at residues 1 to 30 (MGAS…FVDD), 57 to 86 (LEVR…DARV), 91 to 120 (TGWS…DPDH), 124 to 156 (LGNT…RPDD), 158 to 188 (KKRP…QVDV), 192 to 221 (DGAS…DVDR), 226 to 255 (HGWT…DVQL), and 259 to 290 (NGYT…LVDK). The span at 295 to 305 (QRGKSALRRRA) shows a compositional bias: basic residues. Disordered stretches follow at residues 295-320 (QRGK…TGLK) and 449-645 (LRDA…ITDE). Residues 462-478 (PGRSSAGSDTASISRVV) are compositionally biased toward polar residues. Low complexity-rich tracts occupy residues 490 to 506 (GPSP…HSSG) and 582 to 592 (SSRSKSTSPTL). Over residues 593–603 (TPSPSPTPAHT) the composition is skewed to pro residues. The segment covering 604-641 (PAPAHTPAHRPTGASADSQGSASTQQRSRSSGGSSSGT) has biased composition (low complexity). Residues 643-706 (TDEDELSGIL…LAAISELNAG (64 aa)) form the SAM domain.

It localises to the cell projection. The protein localises to the cilium. Its function is as follows. Required for renal function. The polypeptide is Ankyrin repeat and SAM domain-containing protein 6 (anks6) (Danio rerio (Zebrafish)).